Consider the following 143-residue polypeptide: Ribonuclease H (143 aa).

An RNase H type-1 domain is found at 1 to 140 (MKVEIYTDGA…VDALANLGIE (140 aa)). The Mg(2+) site is built by Asp-8, Glu-46, Asp-68, and Asp-132.

It belongs to the RNase H family. As to quaternary structure, monomer. Mg(2+) serves as cofactor.

The protein resides in the cytoplasm. It carries out the reaction Endonucleolytic cleavage to 5'-phosphomonoester.. Endonuclease that specifically degrades the RNA of RNA-DNA hybrids. This is Ribonuclease H from Legionella pneumophila (strain Lens).